Consider the following 235-residue polypeptide: Large ribosomal subunit protein uL1 (235 aa).

It belongs to the universal ribosomal protein uL1 family. As to quaternary structure, part of the 50S ribosomal subunit.

Binds directly to 23S rRNA. The L1 stalk is quite mobile in the ribosome, and is involved in E site tRNA release. In terms of biological role, protein L1 is also a translational repressor protein, it controls the translation of the L11 operon by binding to its mRNA. The sequence is that of Large ribosomal subunit protein uL1 from Synechococcus sp. (strain CC9902).